Consider the following 565-residue polypeptide: UvrABC system protein C (565 aa).

In terms of domain architecture, GIY-YIG spans 12–89 (EEPGVYIFKN…IRTHKPKYNV (78 aa)). Residues 195–230 (KDVLPTLYEKIEQYASNLAFEKAAFLRDQVLVLQNI) enclose the UVR domain.

Belongs to the UvrC family. As to quaternary structure, interacts with UvrB in an incision complex.

It is found in the cytoplasm. The UvrABC repair system catalyzes the recognition and processing of DNA lesions. UvrC both incises the 5' and 3' sides of the lesion. The N-terminal half is responsible for the 3' incision and the C-terminal half is responsible for the 5' incision. This chain is UvrABC system protein C, found in Hydrogenobaculum sp. (strain Y04AAS1).